A 466-amino-acid chain; its full sequence is Cysteine--tRNA ligase (466 aa).

Cys-29 is a binding site for Zn(2+). The short motif at 31–41 (PTVYNYIHIGN) is the 'HIGH' region element. Residues Cys-209, His-234, and Glu-238 each coordinate Zn(2+). Positions 266 to 270 (KMSKS) match the 'KMSKS' region motif. Lys-269 contributes to the ATP binding site. Ser-270 is modified (phosphoserine).

This sequence belongs to the class-I aminoacyl-tRNA synthetase family. As to quaternary structure, monomer. The cofactor is Zn(2+).

Its subcellular location is the cytoplasm. The catalysed reaction is tRNA(Cys) + L-cysteine + ATP = L-cysteinyl-tRNA(Cys) + AMP + diphosphate. The polypeptide is Cysteine--tRNA ligase (cysS) (Halalkalibacterium halodurans (strain ATCC BAA-125 / DSM 18197 / FERM 7344 / JCM 9153 / C-125) (Bacillus halodurans)).